The sequence spans 505 residues: ATP synthase subunit alpha, chloroplastic (505 aa).

170–177 lines the ATP pocket; that stretch reads GDRQTGKT.

This sequence belongs to the ATPase alpha/beta chains family. As to quaternary structure, F-type ATPases have 2 components, CF(1) - the catalytic core - and CF(0) - the membrane proton channel. CF(1) has five subunits: alpha(3), beta(3), gamma(1), delta(1), epsilon(1). CF(0) has four main subunits: a, b, b' and c.

The protein resides in the plastid. It localises to the chloroplast thylakoid membrane. The enzyme catalyses ATP + H2O + 4 H(+)(in) = ADP + phosphate + 5 H(+)(out). Produces ATP from ADP in the presence of a proton gradient across the membrane. The alpha chain is a regulatory subunit. The polypeptide is ATP synthase subunit alpha, chloroplastic (Phaeodactylum tricornutum (strain CCAP 1055/1)).